The following is a 140-amino-acid chain: Putative pre-16S rRNA nuclease (140 aa).

The protein belongs to the YqgF nuclease family.

Its subcellular location is the cytoplasm. In terms of biological role, could be a nuclease involved in processing of the 5'-end of pre-16S rRNA. The sequence is that of Putative pre-16S rRNA nuclease from Yersinia pseudotuberculosis serotype O:1b (strain IP 31758).